Consider the following 1072-residue polypeptide: Serine/threonine-protein kinase 11-interacting protein (1072 aa).

LRR repeat units lie at residues 109–130, 132–152, 164–185, 187–209, 210–231, 233–254, 255–276, and 280–301; these read SLRQ…RGIY, QLES…LSAC, ALLS…LRLL, ALRF…MDLC, ELYH…GPSG, ALGT…EQLK, NLRH…APLW, and ELRK…RAAT. The disordered stretch occupies residues 333–366; the sequence is DSSGLGPVIQPLSWPVGSTTETSGGPELSDSLSS. Serine 388, serine 390, and serine 393 each carry phosphoserine. A compositionally biased stretch (polar residues) spans 441 to 454; it reads MGSSPLSTTKTPAL. Disordered regions lie at residues 441 to 522 and 741 to 762; these read MGSS…EQKA and RPDG…SLSP. 2 stretches are compositionally biased toward basic and acidic residues: residues 478–492 and 501–510; these read KESP…RVEP and EQDKEEGSRE. Phosphoserine is present on residues serine 757, serine 761, and serine 763. A disordered region spans residues 967 to 993; the sequence is HAESPLPVVSDETSEQPASLGPGPSLQ.

The protein belongs to the STK11IP family. As to quaternary structure, found in a ternary complex composed of STK11/LKB1, STK11IP and SMAD4. Interacts with SMAD4. Interacts with STK11/LKB1.

The protein resides in the cytoplasm. May regulate STK11/LKB1 function by controlling its subcellular localization. This chain is Serine/threonine-protein kinase 11-interacting protein (Stk11ip), found in Mus musculus (Mouse).